The primary structure comprises 66 residues: Large ribosomal subunit protein uL29 (66 aa).

The protein belongs to the universal ribosomal protein uL29 family.

In Hydrogenobaculum sp. (strain Y04AAS1), this protein is Large ribosomal subunit protein uL29.